The sequence spans 255 residues: MDMTDGCQFSPSEYFYEGSCIPSPEDEFGDQFEPRVAAFGAHKAELQGSDDEEHVRAPTGHHQAGHCLMWACKACKRKSTTMDRRKAATMRERRRLKKVNQAFETLKRCTTTNPNQRLPKVEILRNAIRYIESLQELLREQVENYYSLPGQSCSEPTSPTSNCSDGMPECNSPVWSRKNSSFDSIYCPDVSNACAADKSSVSSLDCLSSIVDRITSTEPSELALQDTASLSPATSANSQPATPGPSSSRLIYHVL.

The bHLH domain occupies Asp-83–Leu-134. Positions Asp-226–Arg-249 are disordered.

In terms of assembly, efficient DNA binding requires dimerization with another bHLH protein.

The protein localises to the nucleus. Acts as a transcriptional activator that promotes transcription of muscle-specific target genes and plays a role in muscle differentiation. Together with MYOG and MYOD1, co-occupies muscle-specific gene promoter core region during myogenesis. Induces fibroblasts to differentiate into myoblasts. Probable sequence specific DNA-binding protein. This is Myogenic factor 5 (Myf5) from Mus musculus (Mouse).